A 557-amino-acid chain; its full sequence is Dihydroxy-acid dehydratase (557 aa).

C49 contacts [2Fe-2S] cluster. D81 contributes to the Mg(2+) binding site. [2Fe-2S] cluster is bound at residue C122. Mg(2+) contacts are provided by D123 and K124. Position 124 is an N6-carboxylysine (K124). C194 is a binding site for [2Fe-2S] cluster. Residue E446 participates in Mg(2+) binding. S472 functions as the Proton acceptor in the catalytic mechanism.

It belongs to the IlvD/Edd family. In terms of assembly, homodimer. [2Fe-2S] cluster is required as a cofactor. Mg(2+) serves as cofactor.

It catalyses the reaction (2R)-2,3-dihydroxy-3-methylbutanoate = 3-methyl-2-oxobutanoate + H2O. It carries out the reaction (2R,3R)-2,3-dihydroxy-3-methylpentanoate = (S)-3-methyl-2-oxopentanoate + H2O. The protein operates within amino-acid biosynthesis; L-isoleucine biosynthesis; L-isoleucine from 2-oxobutanoate: step 3/4. It participates in amino-acid biosynthesis; L-valine biosynthesis; L-valine from pyruvate: step 3/4. Functions in the biosynthesis of branched-chain amino acids. Catalyzes the dehydration of (2R,3R)-2,3-dihydroxy-3-methylpentanoate (2,3-dihydroxy-3-methylvalerate) into 2-oxo-3-methylpentanoate (2-oxo-3-methylvalerate) and of (2R)-2,3-dihydroxy-3-methylbutanoate (2,3-dihydroxyisovalerate) into 2-oxo-3-methylbutanoate (2-oxoisovalerate), the penultimate precursor to L-isoleucine and L-valine, respectively. The protein is Dihydroxy-acid dehydratase of Prochlorococcus marinus (strain MIT 9301).